The chain runs to 20 residues: MKLIAKTRILNTLVFSAAGK.

This Bacillus cereus protein is 26 kDa protein.